The sequence spans 426 residues: Enolase (426 aa).

(2R)-2-phosphoglycerate is bound at residue Q163. The active-site Proton donor is the E205. Positions 242, 286, and 313 each coordinate Mg(2+). (2R)-2-phosphoglycerate-binding residues include K338, R367, S368, and K389. K338 serves as the catalytic Proton acceptor.

This sequence belongs to the enolase family. It depends on Mg(2+) as a cofactor.

Its subcellular location is the cytoplasm. The protein resides in the secreted. It is found in the cell surface. The enzyme catalyses (2R)-2-phosphoglycerate = phosphoenolpyruvate + H2O. The protein operates within carbohydrate degradation; glycolysis; pyruvate from D-glyceraldehyde 3-phosphate: step 4/5. In terms of biological role, catalyzes the reversible conversion of 2-phosphoglycerate (2-PG) into phosphoenolpyruvate (PEP). It is essential for the degradation of carbohydrates via glycolysis. The sequence is that of Enolase from Helicobacter pylori (strain ATCC 700392 / 26695) (Campylobacter pylori).